We begin with the raw amino-acid sequence, 145 residues long: 3-hydroxyacyl-[acyl-carrier-protein] dehydratase FabZ (145 aa).

H49 is a catalytic residue.

Belongs to the thioester dehydratase family. FabZ subfamily.

Its subcellular location is the cytoplasm. It carries out the reaction a (3R)-hydroxyacyl-[ACP] = a (2E)-enoyl-[ACP] + H2O. In terms of biological role, involved in unsaturated fatty acids biosynthesis. Catalyzes the dehydration of short chain beta-hydroxyacyl-ACPs and long chain saturated and unsaturated beta-hydroxyacyl-ACPs. This Rickettsia peacockii (strain Rustic) protein is 3-hydroxyacyl-[acyl-carrier-protein] dehydratase FabZ.